Here is a 400-residue protein sequence, read N- to C-terminus: Enoyl-[acyl-carrier-protein] reductase [NADH] (400 aa).

Residues 48-53 (GSSSGY), 74-75 (FE), 111-112 (DA), and 139-140 (LA) contribute to the NAD(+) site. Position 225 (tyrosine 225) interacts with substrate. Tyrosine 235 serves as the catalytic Proton donor. NAD(+) is bound by residues lysine 244 and 273–275 (VVT).

Belongs to the TER reductase family. Monomer.

The catalysed reaction is a 2,3-saturated acyl-[ACP] + NAD(+) = a (2E)-enoyl-[ACP] + NADH + H(+). It participates in lipid metabolism; fatty acid biosynthesis. Involved in the final reduction of the elongation cycle of fatty acid synthesis (FAS II). Catalyzes the reduction of a carbon-carbon double bond in an enoyl moiety that is covalently linked to an acyl carrier protein (ACP). The polypeptide is Enoyl-[acyl-carrier-protein] reductase [NADH] (Shewanella loihica (strain ATCC BAA-1088 / PV-4)).